Consider the following 421-residue polypeptide: 5-methylthioadenosine/S-adenosylhomocysteine deaminase (421 aa).

Zn(2+) contacts are provided by His60 and His62. The substrate site is built by Glu89 and His181. Residue His208 participates in Zn(2+) binding. Glu211 and Asp296 together coordinate substrate. A Zn(2+)-binding site is contributed by Asp296.

Belongs to the metallo-dependent hydrolases superfamily. MTA/SAH deaminase family. Zn(2+) is required as a cofactor.

The catalysed reaction is S-adenosyl-L-homocysteine + H2O + H(+) = S-inosyl-L-homocysteine + NH4(+). The enzyme catalyses S-methyl-5'-thioadenosine + H2O + H(+) = S-methyl-5'-thioinosine + NH4(+). In terms of biological role, catalyzes the deamination of 5-methylthioadenosine and S-adenosyl-L-homocysteine into 5-methylthioinosine and S-inosyl-L-homocysteine, respectively. Is also able to deaminate adenosine. This is 5-methylthioadenosine/S-adenosylhomocysteine deaminase from Pyrococcus horikoshii (strain ATCC 700860 / DSM 12428 / JCM 9974 / NBRC 100139 / OT-3).